The sequence spans 503 residues: Trehalose-6-phosphate synthase (503 aa).

Residue Arg22 coordinates D-glucose 6-phosphate. 42 to 43 (GG) is a UDP-alpha-D-glucose binding site. D-glucose 6-phosphate is bound by residues Tyr94 and Asp148. UDP-alpha-D-glucose is bound by residues Arg290 and Lys295. Arg328 contacts D-glucose 6-phosphate. 393–397 (LVAKE) contributes to the UDP-alpha-D-glucose binding site. The interval 481–503 (GETGDSGVTGESTPAPESDSGSF) is disordered.

Belongs to the glycosyltransferase 20 family. In terms of assembly, homotetramer.

The catalysed reaction is ADP-alpha-D-glucose + D-glucose 6-phosphate = alpha,alpha-trehalose 6-phosphate + ADP + H(+). It catalyses the reaction CDP-alpha-D-glucose + D-glucose 6-phosphate = alpha,alpha-trehalose 6-phosphate + CDP + H(+). It carries out the reaction GDP-alpha-D-glucose + D-glucose 6-phosphate = alpha,alpha-trehalose 6-phosphate + GDP + H(+). The enzyme catalyses TDP-alpha-D-glucose + D-glucose 6-phosphate = 5-methyl-UDP + alpha,alpha-trehalose 6-phosphate + H(+). The catalysed reaction is D-glucose 6-phosphate + UDP-alpha-D-glucose = alpha,alpha-trehalose 6-phosphate + UDP + H(+). Its pathway is glycan biosynthesis; trehalose biosynthesis. With respect to regulation, stimulated by the polynucleotide FII (physiological activator), and by chondroitin sulfate (CS) and heparin. Activation by the polyanion is inhibited by high salt concentration as well as by high concentrations of mononucleoside phosphates. Its function is as follows. Involved in the production of glycogen and alpha-glucan via the TreS-Pep2 branch involved in the biosynthesis of maltose-1-phosphate (M1P), and probably in the osmoprotection via the biosynthesis of trehalose. Catalyzes the transfer of glucose from UDP-glucose (UDP-Glc) to glucose-6-phosphate (Glc-6-P) to form trehalose-6-phosphate. ADP-Glc, CDP-Glc, GDP-Glc and TDP-Glc are also glucosyl donors, however, when the pyrimidine sugar nucleotides (CDP-Glc, TDP-Glc and UDP-Glc) are used as substrates, there is an absolute requirement for a high molecular weight polyanion for activity. In Mycolicibacterium smegmatis (strain ATCC 700084 / mc(2)155) (Mycobacterium smegmatis), this protein is Trehalose-6-phosphate synthase.